The primary structure comprises 232 residues: Flagellar L-ring protein (232 aa).

The first 21 residues, 1–21 (MQKNAAHTYAISSLLVLSLTG), serve as a signal peptide directing secretion. A lipid anchor (N-palmitoyl cysteine) is attached at cysteine 22. The S-diacylglycerol cysteine moiety is linked to residue cysteine 22.

This sequence belongs to the FlgH family. As to quaternary structure, the basal body constitutes a major portion of the flagellar organelle and consists of four rings (L,P,S, and M) mounted on a central rod.

The protein resides in the cell outer membrane. It is found in the bacterial flagellum basal body. Assembles around the rod to form the L-ring and probably protects the motor/basal body from shearing forces during rotation. In Escherichia coli O6:H1 (strain CFT073 / ATCC 700928 / UPEC), this protein is Flagellar L-ring protein.